The following is an 859-amino-acid chain: MTYKYNCCDDGSGTTVGSVVRFDNVTLLIDPGWNPSKVSYEQCIKYWEKVIPEIDVIILSQPTIECLGAHSLLYYNFTSHFISRIQVYATLPVINLGRVSTIDSYASAGVIGPYDTNKLDLEDIEISFDHIVPLKYSQLVDLRSRYDGLTLLAYNAGVCPGGSIWCISTYSEKLVYAKRWNHTRDNILNAASILDATGKPLSTLMRPSAIITTLDRFGSSQPFKKRSKIFKDTLKKGLSSDGSVIIPVDMSGKFLDLFTQVHELLFESTKINAHTQVPVLILSYARGRTLTYAKSMLEWLSPSLLKTWENRNNTSPFEIGSRIKIIAPNELSKYPGSKICFVSEVGALINEVIIKVGNSEKTTLILTKPSFECASSLDKILEIVEQDERNWKTFPEDGKSFLCDNYISIDTIKEEPLSKEETEAFKVQLKEKKRDRNKKILLVKRESKKLANGNAIIDDTNGERAMRNQDILVENVNGVPPIDHIMGGDEDDDEEEENDNLLNLLKDNSEKSAAKKNTEVPVDIIIQPSAASKHKMFPFNPAKIKKDDYGTVVDFTMFLPDDSDNVNQNSRKRPLKDGAKTTSPVNEEDNKNEEEDGYNMSDPISKRSKHRASRYSGFSGTGEAENFDNLDYLKIDKTLSKRTISTVNVQLKCSVVILNLQSLVDQRSASIIWPSLKSRKIVLSAPKQIQNEEITAKLIKKNIEVVNMPLNKIVEFSTTIKTLDISIDSNLDNLLKWQRISDSYTVATVVGRLVKESLPQVNNHQKTASRSKLVLKPLHGSSRSHKTGALSIGDVRLAQLKKLLTEKNYIAEFKGEGTLVINEKVAVRKINDAETIIDGTPSELFDTVKKLVTDMLAKI.

A disordered region spans residues 560-611; that stretch reads PDDSDNVNQNSRKRPLKDGAKTTSPVNEEDNKNEEEDGYNMSDPISKRSKHR. Residues 586-597 show a composition bias toward acidic residues; sequence NEEDNKNEEEDG.

As to quaternary structure, component of the cleavage and polyadenylation factor (CPF) complex, which is composed of at least PTI1, SYC1, SSU72, GLC7, MPE1, REF2, PFS2, PTA1, YSH1/BRR5, SWD2, CFT2/YDH1, YTH1, CFT1/YHH1, FIP1 and PAP1. Interacts with the CTD domain of RPB1/RNA polymerase II; the interaction is enhanced upon phosphorylation of the RPB1 CTD domain. Interacts with PCF11.

The protein localises to the nucleus. Its function is as follows. RNA-binding component of the cleavage and polyadenylation factor (CPF) complex, which plays a key role in polyadenylation-dependent pre-mRNA 3'-end formation and cooperates with cleavage factors including the CFIA complex and NAB4/CFIB. May be involved in poly(A)-site recognition. May be involved in the association of the CPF, CPFIA and RNA polymerase II complexes. The chain is Cleavage factor two protein 2 (CFT2) from Saccharomyces cerevisiae (strain ATCC 204508 / S288c) (Baker's yeast).